The chain runs to 231 residues: tRNA1(Val) (adenine(37)-N6)-methyltransferase (231 aa).

It belongs to the methyltransferase superfamily. tRNA (adenine-N(6)-)-methyltransferase family.

The protein localises to the cytoplasm. The catalysed reaction is adenosine(37) in tRNA1(Val) + S-adenosyl-L-methionine = N(6)-methyladenosine(37) in tRNA1(Val) + S-adenosyl-L-homocysteine + H(+). In terms of biological role, specifically methylates the adenine in position 37 of tRNA(1)(Val) (anticodon cmo5UAC). In Flavobacteriaceae bacterium (strain 3519-10), this protein is tRNA1(Val) (adenine(37)-N6)-methyltransferase.